The sequence spans 412 residues: Peptidase T (412 aa).

His79 contacts Zn(2+). The active site involves Asp81. Asp142 serves as a coordination point for Zn(2+). Glu176 acts as the Proton acceptor in catalysis. Positions 177, 199, and 381 each coordinate Zn(2+).

Belongs to the peptidase M20B family. The cofactor is Zn(2+).

The protein localises to the cytoplasm. The catalysed reaction is Release of the N-terminal residue from a tripeptide.. Its function is as follows. Cleaves the N-terminal amino acid of tripeptides. This chain is Peptidase T, found in Exiguobacterium sp. (strain ATCC BAA-1283 / AT1b).